The sequence spans 78 residues: Large ribosomal subunit protein bL28 (78 aa).

This sequence belongs to the bacterial ribosomal protein bL28 family.

In Shigella boydii serotype 4 (strain Sb227), this protein is Large ribosomal subunit protein bL28.